The sequence spans 74 residues: Sec-independent protein translocase protein TatA (74 aa).

A helical membrane pass occupies residues 1 to 21 (MGGISIWQLLIIVAIIVLLFG). The tract at residues 51-74 (ANFDKVEAKESTSTTEKTKEKEQA) is disordered.

It belongs to the TatA/E family. The Tat system comprises two distinct complexes: a TatABC complex, containing multiple copies of TatA, TatB and TatC subunits, and a separate TatA complex, containing only TatA subunits. Substrates initially bind to the TatABC complex, which probably triggers association of the separate TatA complex to form the active translocon.

It localises to the cell inner membrane. In terms of biological role, part of the twin-arginine translocation (Tat) system that transports large folded proteins containing a characteristic twin-arginine motif in their signal peptide across membranes. TatA could form the protein-conducting channel of the Tat system. The chain is Sec-independent protein translocase protein TatA from Haemophilus ducreyi (strain 35000HP / ATCC 700724).